Reading from the N-terminus, the 426-residue chain is C4-dicarboxylate transport protein (426 aa).

The next 8 membrane-spanning stretches (helical) occupy residues 8 to 28 (VLYV…HFYP), 44 to 64 (LIKM…IAGM), 78 to 98 (LLYF…ATHL), 148 to 168 (GEIL…AHVG), 184 to 204 (ILFG…FGAM), 222 to 242 (LIGT…GFIA), 297 to 317 (GYSF…LFIA), and 355 to 375 (AATL…ILGI).

Belongs to the dicarboxylate/amino acid:cation symporter (DAACS) (TC 2.A.23) family.

Its subcellular location is the cell inner membrane. In terms of biological role, responsible for the transport of dicarboxylates such as succinate, fumarate, and malate from the periplasm across the membrane. The protein is C4-dicarboxylate transport protein of Paraburkholderia phymatum (strain DSM 17167 / CIP 108236 / LMG 21445 / STM815) (Burkholderia phymatum).